The primary structure comprises 316 residues: F-box protein At4g09920 (316 aa).

The F-box domain occupies 1–47 (MDRIIGLPDEVLVKILSFVPTKVAVSTSILSKRWEFLWMWLTKLKFG).

In Arabidopsis thaliana (Mouse-ear cress), this protein is F-box protein At4g09920.